The primary structure comprises 212 residues: Peptide methionine sulfoxide reductase MsrA (212 aa).

Cys52 is an active-site residue.

This sequence belongs to the MsrA Met sulfoxide reductase family.

The catalysed reaction is L-methionyl-[protein] + [thioredoxin]-disulfide + H2O = L-methionyl-(S)-S-oxide-[protein] + [thioredoxin]-dithiol. It catalyses the reaction [thioredoxin]-disulfide + L-methionine + H2O = L-methionine (S)-S-oxide + [thioredoxin]-dithiol. Functionally, has an important function as a repair enzyme for proteins that have been inactivated by oxidation. Catalyzes the reversible oxidation-reduction of methionine sulfoxide in proteins to methionine. The sequence is that of Peptide methionine sulfoxide reductase MsrA from Escherichia coli (strain ATCC 8739 / DSM 1576 / NBRC 3972 / NCIMB 8545 / WDCM 00012 / Crooks).